A 138-amino-acid chain; its full sequence is uncharacterized protein (138 aa).

3 consecutive transmembrane segments (helical) span residues 17–37, 43–63, and 117–137; these read LIVS…TVFF, INLI…LLVC, and FWWM…VVSL.

Its subcellular location is the cell membrane. This is an uncharacterized protein from Mycoplasma pneumoniae (strain ATCC 29342 / M129 / Subtype 1) (Mycoplasmoides pneumoniae).